Reading from the N-terminus, the 110-residue chain is Nucleoid-associated protein Sfum_2790 (110 aa).

This sequence belongs to the YbaB/EbfC family. As to quaternary structure, homodimer.

It is found in the cytoplasm. Its subcellular location is the nucleoid. Binds to DNA and alters its conformation. May be involved in regulation of gene expression, nucleoid organization and DNA protection. The protein is Nucleoid-associated protein Sfum_2790 of Syntrophobacter fumaroxidans (strain DSM 10017 / MPOB).